The following is a 76-amino-acid chain: UPF0346 protein LBUL_1194 (76 aa).

This sequence belongs to the UPF0346 family.

The chain is UPF0346 protein LBUL_1194 from Lactobacillus delbrueckii subsp. bulgaricus (strain ATCC BAA-365 / Lb-18).